The following is a 225-amino-acid chain: Small ribosomal subunit protein uS3 (225 aa).

A KH type-2 domain is found at 38–106 (LRGHLRKKLS…DVALNIVEIR (69 aa)).

The protein belongs to the universal ribosomal protein uS3 family. Part of the 30S ribosomal subunit. Forms a tight complex with proteins S10 and S14.

Binds the lower part of the 30S subunit head. Binds mRNA in the 70S ribosome, positioning it for translation. The sequence is that of Small ribosomal subunit protein uS3 from Granulibacter bethesdensis (strain ATCC BAA-1260 / CGDNIH1).